Reading from the N-terminus, the 952-residue chain is Inter-alpha-trypsin inhibitor heavy chain H5 (952 aa).

The signal sequence occupies residues 1–17 (MLLLLGLCLGLPLFSES). The VIT domain maps to 35 to 161 (VPRQLRLLQR…KAAFFLSYEE (127 aa)). N-linked (GlcNAc...) asparagine glycans are attached at residues Asn97, Asn127, Asn136, and Asn231. Positions 113–131 (QKDKKSSESVKDKRNRTSD) are enriched in basic and acidic residues. Residues 113-138 (QKDKKSSESVKDKRNRTSDDNEENGS) are disordered. The VWFA domain occupies 295–478 (NVVFVLDISA…AQLIGFYDEI (184 aa)). Asn508, Asn776, Asn795, and Asn862 each carry an N-linked (GlcNAc...) asparagine glycan. The segment at 933-952 (ALGLSTPRKPETDRPHEESV) is disordered. The span at 940-952 (RKPETDRPHEESV) shows a compositional bias: basic and acidic residues.

Belongs to the ITIH family.

It is found in the secreted. Its function is as follows. May act as a tumor suppressor. This is Inter-alpha-trypsin inhibitor heavy chain H5 (Itih5) from Mus musculus (Mouse).